Consider the following 127-residue polypeptide: ATP synthase epsilon chain (127 aa).

It belongs to the ATPase epsilon chain family. As to quaternary structure, F-type ATPases have 2 components, CF(1) - the catalytic core - and CF(0) - the membrane proton channel. CF(1) has five subunits: alpha(3), beta(3), gamma(1), delta(1), epsilon(1). CF(0) has three main subunits: a, b and c.

Its subcellular location is the cell inner membrane. Functionally, produces ATP from ADP in the presence of a proton gradient across the membrane. The protein is ATP synthase epsilon chain of Leptospira borgpetersenii serovar Hardjo-bovis (strain JB197).